A 145-amino-acid chain; its full sequence is Large ribosomal subunit protein bL19 (145 aa).

Basic and acidic residues predominate over residues 114-136 (IAEKMESPAAKATREAAKKEAKA). A disordered region spans residues 114-145 (IAEKMESPAAKATREAAKKEAKAAKKNAAPAE).

It belongs to the bacterial ribosomal protein bL19 family.

In terms of biological role, this protein is located at the 30S-50S ribosomal subunit interface and may play a role in the structure and function of the aminoacyl-tRNA binding site. This Methylocella silvestris (strain DSM 15510 / CIP 108128 / LMG 27833 / NCIMB 13906 / BL2) protein is Large ribosomal subunit protein bL19.